The chain runs to 371 residues: Polar tube protein 1 (371 aa).

The N-terminal stretch at Met-1 to Ser-22 is a signal peptide. Low complexity-rich tracts occupy residues Pro-65–Glu-94 and Thr-255–Gln-270. Disordered stretches follow at residues Pro-65–Asp-95 and Gln-229–Gln-270.

In terms of processing, glycosylated.

It is found in the spore polar tube. Functionally, involved with PTP2 and PTP3 in formation of a polar tube through which the infectious agent is passed on to the host cell. The chain is Polar tube protein 1 (PTP1) from Encephalitozoon intestinalis (Microsporidian parasite).